Consider the following 748-residue polypeptide: Tyrosine--tRNA ligase 2, cytoplasmic (748 aa).

Residue M1 is modified to N-acetylmethionine. The 'HIGH' region signature appears at 441–449; sequence PSGRMHIAQ. 4 residues coordinate L-tyrosine: Y564, Q568, D571, and Q586. Residues 623–627 carry the 'KMSKS' region motif; the sequence is KMSKS. K626 is a binding site for ATP.

It belongs to the class-I aminoacyl-tRNA synthetase family.

The protein localises to the cytoplasm. The protein resides in the cytosol. The enzyme catalyses tRNA(Tyr) + L-tyrosine + ATP = L-tyrosyl-tRNA(Tyr) + AMP + diphosphate + H(+). Its function is as follows. Catalyzes the attachment of tyrosine to tRNA(Tyr) in a two-step reaction: tyrosine is first activated by ATP to form Tyr-AMP and then transferred to the acceptor end of tRNA(Tyr). This is Tyrosine--tRNA ligase 2, cytoplasmic from Arabidopsis thaliana (Mouse-ear cress).